A 211-amino-acid polypeptide reads, in one-letter code: Calcipressin-like protein (211 aa).

Phosphoserine is present on residues S113 and S117. T182 is modified (phosphothreonine).

It belongs to the RCAN family.

Functionally, inhibits calcineurin-dependent transcriptional responses by binding to the catalytic domain of calcineurin. The sequence is that of Calcipressin-like protein (RCN1) from Saccharomyces cerevisiae (strain ATCC 204508 / S288c) (Baker's yeast).